Here is a 389-residue protein sequence, read N- to C-terminus: TelA-like protein SH1505 (389 aa).

The protein belongs to the TelA family.

The chain is TelA-like protein SH1505 from Staphylococcus haemolyticus (strain JCSC1435).